A 255-amino-acid polypeptide reads, in one-letter code: Putative oxidoreductase YtkK (255 aa).

NAD(+) is bound at residue 7–14 (TAGSKGLG).

The protein belongs to the short-chain dehydrogenases/reductases (SDR) family.

The polypeptide is Putative oxidoreductase YtkK (ytkK) (Bacillus subtilis (strain 168)).